Reading from the N-terminus, the 128-residue chain is MARGHRSQIKRERNANKDTRPSAKLSYARVSVQKACFVLDAVRGKDVQTALGILAYNPRYASTLIEKLLKSAIANAENNNGMDVSKLYIEECYAGCAPTMKRIKPRAQGRAYRILKRLSHITIVLNER.

The interval 1 to 22 (MARGHRSQIKRERNANKDTRPS) is disordered. A compositionally biased stretch (basic and acidic residues) spans 9–21 (IKRERNANKDTRP).

The protein belongs to the universal ribosomal protein uL22 family. Part of the 50S ribosomal subunit.

This protein binds specifically to 23S rRNA; its binding is stimulated by other ribosomal proteins, e.g. L4, L17, and L20. It is important during the early stages of 50S assembly. It makes multiple contacts with different domains of the 23S rRNA in the assembled 50S subunit and ribosome. In terms of biological role, the globular domain of the protein is located near the polypeptide exit tunnel on the outside of the subunit, while an extended beta-hairpin is found that lines the wall of the exit tunnel in the center of the 70S ribosome. In Lachnoclostridium phytofermentans (strain ATCC 700394 / DSM 18823 / ISDg) (Clostridium phytofermentans), this protein is Large ribosomal subunit protein uL22.